We begin with the raw amino-acid sequence, 100 residues long: MAKKSMIARDVKRKKIVERYAAKRAALMEAFNAAKDPMQRLEIHRKIQALPRNSAPNRIRNRCWATGKPRGVYRDFGLCRNQLRERAHKGELPGVVKSSW.

The protein belongs to the universal ribosomal protein uS14 family. Part of the 30S ribosomal subunit. Contacts proteins S3 and S10.

Binds 16S rRNA, required for the assembly of 30S particles and may also be responsible for determining the conformation of the 16S rRNA at the A site. This Prochlorococcus marinus (strain MIT 9313) protein is Small ribosomal subunit protein uS14.